Reading from the N-terminus, the 221-residue chain is Putative hemin import ATP-binding protein HrtA (221 aa).

Positions 3–221 constitute an ABC transporter domain; that stretch reads LVVKDIVKNF…IELEDGKITD (219 aa). Position 39–46 (39–46) interacts with ATP; the sequence is GASGSGKT.

This sequence belongs to the ABC transporter superfamily. HrtA family. In terms of assembly, the complex is composed of two ATP-binding proteins (HrtA), two transmembrane proteins (HrtB) and a solute-binding protein.

Its subcellular location is the cell membrane. Functionally, part of the ABC transporter complex hrt involved in hemin import. Responsible for energy coupling to the transport system. The chain is Putative hemin import ATP-binding protein HrtA (hrtA) from Staphylococcus aureus (strain Mu50 / ATCC 700699).